A 391-amino-acid polypeptide reads, in one-letter code: Esterase (391 aa).

An N-terminal signal peptide occupies residues 1–26 (MEFPETNNNPIITLSFLLCMLSLAYA). Catalysis depends on Ser-41, which acts as the Nucleophile. Residues Asn-186, Asn-193, and Asn-313 are each glycosylated (N-linked (GlcNAc...) asparagine). Residues Asp-347 and His-350 contribute to the active site.

The protein belongs to the 'GDSL' lipolytic enzyme family. In terms of processing, the N-terminus is blocked. Post-translationally, glycosylated.

Functionally, has lipase and esterase activities. May be involved in plant defense. This Hevea brasiliensis (Para rubber tree) protein is Esterase.